Consider the following 189-residue polypeptide: Mediator of RNA polymerase II transcription subunit 10b (189 aa).

The tract at residues 1–22 is disordered; sequence MDPTQNTSAGIGGSNGTIRYQT.

Belongs to the Mediator complex subunit 10 family. In terms of assembly, component of the Mediator complex.

It is found in the nucleus. In terms of biological role, component of the Mediator complex, a coactivator involved in the regulated transcription of nearly all RNA polymerase II-dependent genes. Mediator functions as a bridge to convey information from gene-specific regulatory proteins to the basal RNA polymerase II transcription machinery. The Mediator complex, having a compact conformation in its free form, is recruited to promoters by direct interactions with regulatory proteins and serves for the assembly of a functional preinitiation complex with RNA polymerase II and the general transcription factors. The sequence is that of Mediator of RNA polymerase II transcription subunit 10b (MED10B) from Arabidopsis thaliana (Mouse-ear cress).